The following is a 241-amino-acid chain: Proteasome subunit alpha (241 aa).

It belongs to the peptidase T1A family. As to quaternary structure, the 20S proteasome core is composed of 14 alpha and 14 beta subunits that assemble into four stacked heptameric rings, resulting in a barrel-shaped structure. The two inner rings, each composed of seven catalytic beta subunits, are sandwiched by two outer rings, each composed of seven alpha subunits. The catalytic chamber with the active sites is on the inside of the barrel. Has a gated structure, the ends of the cylinder being occluded by the N-termini of the alpha-subunits. Is capped at one or both ends by the proteasome regulatory ATPase, PAN.

Its subcellular location is the cytoplasm. With respect to regulation, the formation of the proteasomal ATPase PAN-20S proteasome complex, via the docking of the C-termini of PAN into the intersubunit pockets in the alpha-rings, triggers opening of the gate for substrate entry. Interconversion between the open-gate and close-gate conformations leads to a dynamic regulation of the 20S proteasome proteolysis activity. Functionally, component of the proteasome core, a large protease complex with broad specificity involved in protein degradation. The sequence is that of Proteasome subunit alpha from Saccharolobus islandicus (strain M.16.4 / Kamchatka #3) (Sulfolobus islandicus).